The primary structure comprises 40 residues: MTAKTKQSWNKGIWENGKQGSHQQTFLPKIWVNIYSTPTS.

A compositionally biased stretch (polar residues) spans 1–10 (MTAKTKQSWN). A disordered region spans residues 1 to 20 (MTAKTKQSWNKGIWENGKQG).

It localises to the cytoplasm. The protein localises to the cytosol. Its subcellular location is the peroxisome matrix. Modulates the lysine biosynthesis pathway, possibly by stabilizing the lysine biosynthesis LYS1 protein in lysine-deplete conditions. This chain is Peroxisomal LYS1 stabilizing protein 1, found in Saccharomyces cerevisiae (strain ATCC 204508 / S288c) (Baker's yeast).